Reading from the N-terminus, the 454-residue chain is Asparagine--tRNA ligase (454 aa).

Belongs to the class-II aminoacyl-tRNA synthetase family. In terms of assembly, homodimer.

It localises to the cytoplasm. It carries out the reaction tRNA(Asn) + L-asparagine + ATP = L-asparaginyl-tRNA(Asn) + AMP + diphosphate + H(+). The protein is Asparagine--tRNA ligase of Mycoplasma capricolum subsp. capricolum (strain California kid / ATCC 27343 / NCTC 10154).